Reading from the N-terminus, the 351-residue chain is 3-dehydroquinate synthase (351 aa).

NAD(+) contacts are provided by residues 60 to 65, 94 to 98, 118 to 119, K131, K140, and 158 to 161; these read DGEEYK, GVISD, TT, and FLKT. Zn(2+) contacts are provided by E173, H239, and H256.

Belongs to the sugar phosphate cyclases superfamily. Dehydroquinate synthase family. Requires Co(2+) as cofactor. Zn(2+) serves as cofactor. NAD(+) is required as a cofactor.

The protein localises to the cytoplasm. It carries out the reaction 7-phospho-2-dehydro-3-deoxy-D-arabino-heptonate = 3-dehydroquinate + phosphate. It participates in metabolic intermediate biosynthesis; chorismate biosynthesis; chorismate from D-erythrose 4-phosphate and phosphoenolpyruvate: step 2/7. In terms of biological role, catalyzes the conversion of 3-deoxy-D-arabino-heptulosonate 7-phosphate (DAHP) to dehydroquinate (DHQ). The chain is 3-dehydroquinate synthase from Campylobacter jejuni subsp. doylei (strain ATCC BAA-1458 / RM4099 / 269.97).